The sequence spans 132 residues: MSKIDKPLDSWREELTEEQFHICRLGGTERAFSGEYHATKTPGVYHCTCCGTALFDSDAKYDSGSGWPSYFQPVDGEAVRELDDFSHGMHRIEVRCGRCDAHLGHVFPDGPRPTGLRYCINSASLKLVPREG.

The region spanning 8–130 is the MsrB domain; sequence LDSWREELTE…NSASLKLVPR (123 aa). Zn(2+) is bound by residues C47, C50, C96, and C99. C119 functions as the Nucleophile in the catalytic mechanism.

This sequence belongs to the MsrB Met sulfoxide reductase family. Requires Zn(2+) as cofactor.

It catalyses the reaction L-methionyl-[protein] + [thioredoxin]-disulfide + H2O = L-methionyl-(R)-S-oxide-[protein] + [thioredoxin]-dithiol. This is Peptide methionine sulfoxide reductase MsrB from Pseudomonas paraeruginosa (strain DSM 24068 / PA7) (Pseudomonas aeruginosa (strain PA7)).